The chain runs to 444 residues: Transposase for insertion sequence element IS1557 (444 aa).

Residues proline 273–arginine 292 form a disordered region.

It belongs to the transposase 12 family.

The polypeptide is Transposase for insertion sequence element IS1557 (Mycobacterium tuberculosis (strain CDC 1551 / Oshkosh)).